Here is a 310-residue protein sequence, read N- to C-terminus: Transcription initiation factor IIB (310 aa).

Residues 9-41 form a TFIIB-type zinc finger; the sequence is DKQTVCPECGSTELIGDYERAEVVCAHCGLVID. Positions 14, 17, 33, and 36 each coordinate Zn(2+). Tandem repeats lie at residues 127–210 and 221–302.

Belongs to the TFIIB family.

In terms of biological role, stabilizes TBP binding to an archaeal box-A promoter. Also responsible for recruiting RNA polymerase II to the pre-initiation complex (DNA-TBP-TFIIB). The sequence is that of Transcription initiation factor IIB from Methanobrevibacter smithii (strain ATCC 35061 / DSM 861 / OCM 144 / PS).